A 263-amino-acid chain; its full sequence is Phosphoinositide-3-kinase-interacting protein 1 (263 aa).

The first 18 residues, 1 to 18 (MFGRLYFMLLLSVGLVDC), serve as a signal peptide directing secretion. Residues 19 to 163 (LSVVKDCITN…SGPKKKKDLG (145 aa)) are Extracellular-facing. Positions 24 to 99 (DCITNNGEDY…KKEACDIRIC (76 aa)) constitute a Kringle domain. 3 cysteine pairs are disulfide-bonded: Cys-25/Cys-99, Cys-46/Cys-80, and Cys-69/Cys-94. The N-linked (GlcNAc...) asparagine glycan is linked to Asn-103. The chain crosses the membrane as a helical span at residues 164–184 (TLGYVLAVFMMAIIILLGGGI). At 185 to 263 (TMGYFYKRGR…LMGSAGTPGA (79 aa)) the chain is on the cytoplasmic side. Residues 239–263 (NNQTPTQEPVEGADPLMGSAGTPGA) are disordered.

The protein localises to the cell membrane. In terms of biological role, negative regulator of hepatic phosphatidylinositol 3-kinase (PI3K) activity. This is Phosphoinositide-3-kinase-interacting protein 1 (pik3ip1) from Danio rerio (Zebrafish).